Consider the following 514-residue polypeptide: Beta-galactoside alpha-2,6-sialyltransferase 2 (514 aa).

At Met-1–Arg-10 the chain is on the cytoplasmic side. The helical; Signal-anchor for type II membrane protein transmembrane segment at Leu-11–Met-31 threads the bilayer. At Glu-32–Pro-514 the chain is on the lumenal side. The span at Ala-70–Ser-92 shows a compositional bias: low complexity. The segment at Ala-70 to Ser-183 is disordered. Over residues Phe-119 to Ser-132 the composition is skewed to polar residues. The span at Pro-145–Gly-166 shows a compositional bias: acidic residues. Intrachain disulfides connect Cys-246/Cys-512, Cys-289/Cys-441, and Cys-459/Cys-470. Residues Asn-330, Asn-350, and Asn-357 are each glycosylated (N-linked (GlcNAc...) asparagine).

It belongs to the glycosyltransferase 29 family.

It is found in the golgi apparatus. Its subcellular location is the golgi stack membrane. It carries out the reaction a beta-D-galactoside + CMP-N-acetyl-beta-neuraminate = an N-acetyl-alpha-neuraminyl-(2-&gt;6)-beta-D-galactosyl derivative + CMP + H(+). Functionally, transfers sialic acid from the donor of substrate CMP-sialic acid to galactose containing acceptor substrates. The sequence is that of Beta-galactoside alpha-2,6-sialyltransferase 2 (st6gal2) from Danio rerio (Zebrafish).